The following is a 413-amino-acid chain: Arginine biosynthesis bifunctional protein ArgJ (413 aa).

Positions 163, 189, 200, 286, 408, and 413 each coordinate substrate. Thr-200 (nucleophile) is an active-site residue.

It belongs to the ArgJ family. Heterotetramer of two alpha and two beta chains.

The protein localises to the cytoplasm. The catalysed reaction is N(2)-acetyl-L-ornithine + L-glutamate = N-acetyl-L-glutamate + L-ornithine. The enzyme catalyses L-glutamate + acetyl-CoA = N-acetyl-L-glutamate + CoA + H(+). It participates in amino-acid biosynthesis; L-arginine biosynthesis; L-ornithine and N-acetyl-L-glutamate from L-glutamate and N(2)-acetyl-L-ornithine (cyclic): step 1/1. Its pathway is amino-acid biosynthesis; L-arginine biosynthesis; N(2)-acetyl-L-ornithine from L-glutamate: step 1/4. In terms of biological role, catalyzes two activities which are involved in the cyclic version of arginine biosynthesis: the synthesis of N-acetylglutamate from glutamate and acetyl-CoA as the acetyl donor, and of ornithine by transacetylation between N(2)-acetylornithine and glutamate. This Staphylococcus aureus (strain Mu50 / ATCC 700699) protein is Arginine biosynthesis bifunctional protein ArgJ.